The following is a 314-amino-acid chain: Probable cell division protein WhiA (314 aa).

A DNA-binding region (H-T-H motif) is located at residues 282–314 (SLKELGELCRPPVSKSGAAHRMRQLMALAESLE).

It belongs to the WhiA family.

Its function is as follows. Involved in cell division and chromosome segregation. This chain is Probable cell division protein WhiA, found in Symbiobacterium thermophilum (strain DSM 24528 / JCM 14929 / IAM 14863 / T).